The chain runs to 255 residues: Hydroxyacylglutathione hydrolase (255 aa).

Zn(2+) is bound by residues H55, H57, D59, H60, H111, D131, and H169.

This sequence belongs to the metallo-beta-lactamase superfamily. Glyoxalase II family. Monomer. It depends on Zn(2+) as a cofactor.

The catalysed reaction is an S-(2-hydroxyacyl)glutathione + H2O = a 2-hydroxy carboxylate + glutathione + H(+). Its pathway is secondary metabolite metabolism; methylglyoxal degradation; (R)-lactate from methylglyoxal: step 2/2. Functionally, thiolesterase that catalyzes the hydrolysis of S-D-lactoyl-glutathione to form glutathione and D-lactic acid. The polypeptide is Hydroxyacylglutathione hydrolase (Chromohalobacter salexigens (strain ATCC BAA-138 / DSM 3043 / CIP 106854 / NCIMB 13768 / 1H11)).